Reading from the N-terminus, the 824-residue chain is Glycerol-3-phosphate acyltransferase (824 aa).

An HXXXXD motif motif is present at residues 302 to 307 (CHRSHM).

This sequence belongs to the GPAT/DAPAT family.

Its subcellular location is the cell inner membrane. The enzyme catalyses sn-glycerol 3-phosphate + an acyl-CoA = a 1-acyl-sn-glycero-3-phosphate + CoA. It participates in phospholipid metabolism; CDP-diacylglycerol biosynthesis; CDP-diacylglycerol from sn-glycerol 3-phosphate: step 1/3. In Actinobacillus pleuropneumoniae serotype 5b (strain L20), this protein is Glycerol-3-phosphate acyltransferase.